The primary structure comprises 259 residues: Thiazole synthase (259 aa).

The active-site Schiff-base intermediate with DXP is lysine 99. Residues glycine 160, 186–187 (AG), and 208–209 (NT) contribute to the 1-deoxy-D-xylulose 5-phosphate site.

This sequence belongs to the ThiG family. Homotetramer. Forms heterodimers with either ThiH or ThiS.

It is found in the cytoplasm. The catalysed reaction is [ThiS sulfur-carrier protein]-C-terminal-Gly-aminoethanethioate + 2-iminoacetate + 1-deoxy-D-xylulose 5-phosphate = [ThiS sulfur-carrier protein]-C-terminal Gly-Gly + 2-[(2R,5Z)-2-carboxy-4-methylthiazol-5(2H)-ylidene]ethyl phosphate + 2 H2O + H(+). It participates in cofactor biosynthesis; thiamine diphosphate biosynthesis. Catalyzes the rearrangement of 1-deoxy-D-xylulose 5-phosphate (DXP) to produce the thiazole phosphate moiety of thiamine. Sulfur is provided by the thiocarboxylate moiety of the carrier protein ThiS. In vitro, sulfur can be provided by H(2)S. This is Thiazole synthase from Porphyromonas gingivalis (strain ATCC 33277 / DSM 20709 / CIP 103683 / JCM 12257 / NCTC 11834 / 2561).